The sequence spans 108 residues: Small ribosomal subunit protein uS10 (108 aa).

Belongs to the universal ribosomal protein uS10 family. Part of the 30S ribosomal subunit.

In terms of biological role, involved in the binding of tRNA to the ribosomes. This chain is Small ribosomal subunit protein uS10, found in Ehrlichia chaffeensis (strain ATCC CRL-10679 / Arkansas).